A 1659-amino-acid chain; its full sequence is MVAAQDDGAQRKLAHTLLLELMSYQFASPVRWIETQDVVLGQYRAERIIEIGPAATLTNMIKQTVQSKFLHSDRASLLQRQLLASEKQGKDIYYEDDGVGIGTGAEAPAPSAKTQAQASGGAGTIAGAGSSTAPVTAPPAPAAAKAVPAGGMQAIEDRQAQAFEIVRTLLSRILKIALTDVVGTQSIKSLSGGRSTLENEIIGDLASEFGSLPDRAEDLTVNDLSAALQKTFTGQMRKVILKMLHAMFASKMPGQFTVATARTYLHSRWGLGSGRQDSVLLLAIAQQPGSRLKEEAEARSFFDGLVQFYADEHGLTLGANSGAADETSGLGGGLVMDQKTLAALTGGQQELSKALLKIYAKHLDIDLDGDRRALHDLQATVEKDLRLALDQIHQELGEDFTDGVQPVFSARKARRFDSAWSWALQDLLQLYYEVSRTGGETEVDLAAKRCKHIEDAADPRLLDVLQRIVGRFEQQPVLSSMFTQLAQRCRDSLLHGPRYLARPDQQGPRTTISAEGDITYTEQERAEPVPLADLVYLPKSTEAAPLEPFLHLKQRTGGSSAWTYSHDLTEQYRAVLEQATTVGESFAGRSVLITGAGVGSIGAEVLKGLLAGGARVIVTTSRFSSSVVRKYQDLYTQVGSRGSELVVVPFNQASVQDVTALVNYIYDAQGGLHWDLDHILPFAAMPENGRTIEKIDPHSELAHRTMMVNTLRLLGAVKARKEAQGSRTRPTQVILPLSPNHGVFGGDGLYSESKLGLEALFNRWHSEDWSDYLSVCGAVIGWTRGTGLMSGNNLVAEGIEELGCRTFSQQEMAQCLLCLMFNTMCSLCEEAPLYADLSGRMGAVQNLRQKVQELRTEINETANTRRALLEELAMEARCSEGPTPTIDSEPAKATATPTLTAHVRLDFPPTVDYNQEIKPLTADLQGMVDLDRVVVVTGFGEIGPWGNARTRWEMEAYGEFSLEGCVEMAWLMGLIRYENSSSPGWVDAKTNERVHDHEVKHKYEEHILSHTGIRLIEPDRFGANYHPEHKQLLHEVLIQEDFPELEVPEATAQQMKLEHGNKVDIIPDPEGGDQCRVVLKKGAKLMVPKALRLDRMVIGQIPTGWDARKYGIPEDVISQVDPVTLYMLACSIEALLSSGITDPYEIYRYIHVSEAGNCVGSSLGGFNSLQQMYRGRYMEKEVQKDILQETFVNTIGAWMNMLLMSSAGPIRTPVGACATAIESVELGYDTLISGKAKFCFVGGGDDFGEEVLYEFANMKATANTVDEFEQGREASEMSRPAASTRNGFMESHGCGVQILTTARLAIEMGLPVRGVIAFVETSSDKASRSVPAPGRGILSKAREVRSSSPSSSLISSPLLNISNRRKRLDFRKKQIEFARETALEELQLEIAHVEESEVEDYIRERTAQINAEAQKDLRNAQYHLGNAFWQNDPSIAPLRGALAVWGLTIDDLDVASFHGTSTKLNEKNECSLIQAQLSHLGRAKGNVILGVFQKYLTGHPKGAAGAWMLNGALQILDTGIVPGNRNLDNVEAELQKNEQIAFLNRSLDTGRGSMRAVSVTSFGFGQKGAQTIVVHPKYLFATLEEQEYEEYLDKRAKRQKKADSFFYRGLASNRLFELKTAPPWAPQKELETLLDPTPPQTNVDDRVARSIVQQESAEP.

Positions 114 to 139 are disordered; the sequence is TQAQASGGAGTIAGAGSSTAPVTAPP. The Carrier domain occupies 160 to 235; the sequence is AQAFEIVRTL…AALQKTFTGQ (76 aa). Ser195 is subject to O-(pantetheine 4'-phosphoryl)serine. Residues 588 to 826 are ketoreductase (KR) domain; that stretch reads GRSVLITGAG…LCLMFNTMCS (239 aa). The region spanning 1030–1575 is the Ketosynthase family 3 (KS3) domain; sequence KQLLHEVLIQ…QKGAQTIVVH (546 aa). Catalysis depends on for beta-ketoacyl synthase activity residues Cys1217, His1458, and His1499. The segment at 1631–1659 is disordered; sequence ETLLDPTPPQTNVDDRVARSIVQQESAEP.

Belongs to the thiolase-like superfamily. Fungal fatty acid synthetase subunit alpha family. [Alpha(6)beta(6)] hexamers of two multifunctional subunits (alpha and beta). 4'-phosphopantetheine is transferred from CoA to a specific serine of the acyl carrier domain by the C-terminal PPT domain. This modification is essential for activity because fatty acids are bound in thioester linkage to the sulfhydryl of the prosthetic group.

The catalysed reaction is acetyl-CoA + n malonyl-CoA + 2n NADPH + 4n H(+) = a long-chain-acyl-CoA + n CoA + n CO2 + 2n NADP(+).. The enzyme catalyses a fatty acyl-[ACP] + malonyl-[ACP] + H(+) = a 3-oxoacyl-[ACP] + holo-[ACP] + CO2. It catalyses the reaction a (3R)-hydroxyacyl-[ACP] + NADP(+) = a 3-oxoacyl-[ACP] + NADPH + H(+). The protein operates within secondary metabolite biosynthesis. Its function is as follows. Fatty acid synthase subunit alpha; part of the gene cluster that mediates the biosynthesis of aspercryptins, linear lipopeptides built from six amino acids including 2 highly unusual and nonproteogenic amino acids, 2-amino-octanoic acid (2aoa) and 2-amino-dodecanol (2adol). The core structure of aspercryptins is as follows: Ser/Ala-Thr-Ile/Val-2aoa-Asn-2adol. The first step of aspercryptin biosynthesis is the generation of the fatty acid precursors, octanoic and dodecanoic acids, by the FAS subunits atnF and atnM. The fatty acid precursors are likely transformed into the corresponding alpha-amino fatty acids in three steps. First, they are hydroxylated by the cytochrome P450 monooxygenase atnE, then oxidized to the corresponding alpha-keto acids by the NAD(P)-dependent oxidoreductase atnD, and finally converted to the alpha-amino fatty acids by the PLP-dependent aminotransferases atnH or atnJ. the alpha-amino fatty acids, 2-amino-octanoic and 2-amino-dodecanoic acids, are recognized, activated, and covalently tethered to the NRPS atnA by its fourth and sixth adenylation domains. The second module of atnA is the Thr module and contains an epimerase (E) domain responsible for the epimerization of Thr to D-allo-Thr. Additionally, despite atnA having only one epimerase domain, the first amino acid of aspercryptin A1 is D-Ser, suggesting that serine is either loaded directly as D-Ser on the first module or that the epimerase domain in the threonine module epimerizes both L-Ser and L-Thr. After condensation of the hexapeptide of aspercryptin, the C-terminal reductase (TE) domain might be involved in the reductive release and production of the aldehyde hexapeptide. Further reduction would generate aspercryptins. The variety of aspercryptins produced reflects the flexibility of the atnA NRPS, allowing incorporation of alanine instead of serine, valine for isoleucine, and a C10 fatty amino alcohol instead of the C12 version. AtnB seems to be involved in the selectivity for Ile versus Val by the third module. Moreover, type B, C and D aspercryptins have an additional N-terminal cichorine, acetyl and propionyl group respectively. The polypeptide is Fatty acid synthase subunit alpha (Emericella nidulans (strain FGSC A4 / ATCC 38163 / CBS 112.46 / NRRL 194 / M139) (Aspergillus nidulans)).